The sequence spans 204 residues: Phosphoribosyl-dephospho-CoA transferase (204 aa).

Residues aspartate 129 and aspartate 131 contribute to the active site.

This sequence belongs to the MdcG family.

The enzyme catalyses apo-[malonate decarboxylase ACP] + 2'-(5''-triphospho-alpha-D-ribosyl)-3'-dephospho-CoA = holo-[malonate decarboxylase ACP] + diphosphate. In terms of biological role, transfers 2'-(5-triphosphoribosyl)-3'-dephosphocoenzyme-A to the apo-[acyl-carrier-protein] of the malonate decarboxylase to yield holo-[acyl-carrier-protein]. This is Phosphoribosyl-dephospho-CoA transferase from Pseudomonas putida (Arthrobacter siderocapsulatus).